The chain runs to 894 residues: Pentatricopeptide repeat-containing protein At1g19720 (894 aa).

18 PPR repeats span residues 80-110 (KRST…FGLF), 114-144 (DVFV…MRER), 145-179 (NLFT…GVLP), 180-214 (DDFL…GMSS), 215-245 (CLRV…MRER), 246-280 (DVIA…GISP), 281-315 (GLVT…GITA), 316-350 (DVFT…GVVP), 351-385 (NAVT…GFID), 386-416 (DVLV…VKNK), 417-451 (DVYT…NLRP), 452-486 (NIIT…GKVQ), 488-522 (NTAT…RFMP), 523-557 (NSVT…NLDA), 558-588 (IHAV…METK), 589-623 (DIIT…GITP), 624-659 (NRGT…HIIP), and 660-694 (ALEH…SETP). Residues 695 to 770 (IWESFLTGCR…PLGQSWIEVR (76 aa)) form a type E motif region. Residues 771–801 (NLIHTFTTGDQSKLCTDVLYPLVEKMSRLDN) form a type E(+) motif region. Residues 803–894 (SDQYNGELWI…NGDCSCKDYW (92 aa)) form a type DYW motif region.

Belongs to the PPR family. PCMP-H subfamily.

The protein is Pentatricopeptide repeat-containing protein At1g19720 (DYW7) of Arabidopsis thaliana (Mouse-ear cress).